The chain runs to 415 residues: S-inosyl-L-homocysteine hydrolase (415 aa).

Substrate contacts are provided by D123 and E148. 149–151 (TTT) is an NAD(+) binding site. Positions 178 and 182 each coordinate substrate. Residues N183, 212 to 217 (GYGWCG), E235, 291 to 293 (AGH), and N337 each bind NAD(+).

This sequence belongs to the adenosylhomocysteinase family. The cofactor is NAD(+).

It localises to the cytoplasm. It carries out the reaction S-inosyl-L-homocysteine + H2O = L-homocysteine + inosine. Its pathway is amino-acid biosynthesis; S-adenosyl-L-methionine biosynthesis. Its function is as follows. Catalyzes the hydrolysis of S-inosyl-L-homocysteine (SIH) to L-homocysteine (Hcy) and inosine. Likely functions in a S-adenosyl-L-methionine (SAM) recycling pathway from S-adenosyl-L-homocysteine (SAH) produced from SAM-dependent methylation reactions. Can also catalyze the reverse reaction in vitro, i.e. the synthesis of SIH from Hcy and inosine. The chain is S-inosyl-L-homocysteine hydrolase from Methanococcus maripaludis (strain DSM 14266 / JCM 13030 / NBRC 101832 / S2 / LL).